A 734-amino-acid chain; its full sequence is Threonine--tRNA ligase, cytoplasmic (734 aa).

A disordered region spans residues 1–41 (MSASEAGVTEQVKKLSVKDSSNDAVKPNKKENKKSKQQSLY). Residues 11 to 30 (QVKKLSVKDSSNDAVKPNKK) show a composition bias toward basic and acidic residues. The TGS domain occupies 69 to 135 (SMPRVPLKIV…EGEANEEIKL (67 aa)). Phosphoserine is present on residues Ser-195 and Ser-289. A phosphothreonine mark is found at Thr-297 and Thr-381. Residues Ser-453 and Ser-457 each carry the phosphoserine modification. At Thr-460 the chain carries Phosphothreonine. Phosphoserine is present on Ser-605.

It belongs to the class-II aminoacyl-tRNA synthetase family.

The protein resides in the cytoplasm. It catalyses the reaction tRNA(Thr) + L-threonine + ATP = L-threonyl-tRNA(Thr) + AMP + diphosphate + H(+). This chain is Threonine--tRNA ligase, cytoplasmic (THS1), found in Saccharomyces cerevisiae (strain ATCC 204508 / S288c) (Baker's yeast).